A 688-amino-acid chain; its full sequence is MDNWEDPNFELRNLRVIDLKKILHESGVSFPVNARKIEYIRMVDRIRKNKLSSGPQHLLSHLQKEENSNTSKASSSEDEIAPKYLYPSSPSKSTKKPHNETEPLLSPQFIDKPSNIETPVKIESPHVSQNNTFQSYSELSPNVETSLTMKTPPAHASTPKFRSHKSHRVAVPMSFMDSSALHTSPAFSERLKLLSSSNNFSPQLRSPKISHRLQTSATSSPLQHKRPFTNVPERVSRDIEFAPLDSARPSESSSPYSEVDSAEEDDELFQNYVLQQTRKESKLWSFIKKVFHDIKYANYRLLHNLRAFPGISAISSSYLVHIFMILLGVVAAIFLALLREKMFTAGFCDSGASGSSASILGISFPSLCRTCPPNAICPSPNYVECKPGYVLYEPWYSSLGFWPSKYCVSDTSREESVNIFREECLSVLRSWNAILHCSNNSSDLLERNMSYNAHPYVADNLNISSDHISFPSKPFALGLLHDTLLERKSPTLGLEMFEDLFKASLAVLSETNEVVMDSKLICYDSWAGIPLRCRLKQQLIKFVWRNKVFLFGILALSGVIFKLINFFRTRSIVAKYLPSASRFCVESLKRQKANYQMSRSQEPVIPLIEMHDILFHGNGPLEQIHMTKATARTLWEAIVERVEQVGSVRTRESEVDGEWTRVWEWVGTNTLDFQTDRSFINTTSPLRE.

Disordered regions lie at residues 62–113 (LQKE…IDKP) and 202–227 (PQLRSPKISHRLQTSATSSPLQHKRP). The span at 82–92 (PKYLYPSSPSK) shows a compositional bias: low complexity. A compositionally biased stretch (polar residues) spans 212–222 (RLQTSATSSPL). A run of 2 helical transmembrane segments spans residues 318–338 (YLVHIFMILLGVVAAIFLALL) and 547–567 (KVFLFGILALSGVIFKLINFF). Thr683 carries the post-translational modification Phosphothreonine. Position 684 is a phosphoserine (Ser684).

The protein resides in the nucleus inner membrane. Nucleus inner membrane protein involved in meiosis. Plays a role in regulating nuclear envelope (NE) morphology and nuclear integrity, particularly during spindle pole body (SPB) extrusion or insertion through the NE, and perhaps during karyokinesis. The sequence is that of Lap-Emerin-Man domain protein 2 (lem2) from Schizosaccharomyces pombe (strain 972 / ATCC 24843) (Fission yeast).